A 185-amino-acid chain; its full sequence is Pyruvate/ketoisovalerate oxidoreductases common subunit gamma (185 aa).

In terms of assembly, heterotetramer of one alpha, one beta, one delta and one gamma chain.

It carries out the reaction 2 oxidized [2Fe-2S]-[ferredoxin] + pyruvate + CoA = 2 reduced [2Fe-2S]-[ferredoxin] + acetyl-CoA + CO2 + H(+). It catalyses the reaction 3-methyl-2-oxobutanoate + 2 oxidized [2Fe-2S]-[ferredoxin] + CoA = 2-methylpropanoyl-CoA + 2 reduced [2Fe-2S]-[ferredoxin] + CO2 + H(+). The polypeptide is Pyruvate/ketoisovalerate oxidoreductases common subunit gamma (porG) (Pyrococcus abyssi (strain GE5 / Orsay)).